Consider the following 307-residue polypeptide: Quinolinate synthase (307 aa).

Residues H23 and S40 each coordinate iminosuccinate. C86 contacts [4Fe-4S] cluster. Residues 112-114 (YVN) and S129 each bind iminosuccinate. [4Fe-4S] cluster is bound at residue C173. Residues 199 to 201 (HPE) and T216 each bind iminosuccinate. C265 contributes to the [4Fe-4S] cluster binding site.

It belongs to the quinolinate synthase family. Type 2 subfamily. [4Fe-4S] cluster is required as a cofactor.

It is found in the cytoplasm. The catalysed reaction is iminosuccinate + dihydroxyacetone phosphate = quinolinate + phosphate + 2 H2O + H(+). Its pathway is cofactor biosynthesis; NAD(+) biosynthesis; quinolinate from iminoaspartate: step 1/1. Its function is as follows. Catalyzes the condensation of iminoaspartate with dihydroxyacetone phosphate to form quinolinate. The polypeptide is Quinolinate synthase (Methanocaldococcus jannaschii (strain ATCC 43067 / DSM 2661 / JAL-1 / JCM 10045 / NBRC 100440) (Methanococcus jannaschii)).